The following is an 84-amino-acid chain: Putative defensin-like protein 139 (84 aa).

A signal peptide spans 1–28; the sequence is MEPSNQIFFYLRRSKLLSGLGEIRMAKG. Intrachain disulfides connect Cys37-Cys81, Cys46-Cys65, Cys51-Cys75, and Cys55-Cys77.

Belongs to the DEFL family.

The protein localises to the secreted. This chain is Putative defensin-like protein 139 (LCR7), found in Arabidopsis thaliana (Mouse-ear cress).